The sequence spans 606 residues: Cryptochrome-1 (606 aa).

In terms of domain architecture, Photolyase/cryptochrome alpha/beta spans 3–132 (VNAVHWFRKG…EVIVRISHTL (130 aa)). Lysine 11 participates in a covalent cross-link: Glycyl lysine isopeptide (Lys-Gly) (interchain with G-Cter in ubiquitin). The LIR 1 signature appears at 50-54 (NRWRF). A Phosphoserine; by AMPK modification is found at serine 71. The LIR 2 motif lies at 82–87 (DVFPRL). A Glycyl lysine isopeptide (Lys-Gly) (interchain with G-Cter in ubiquitin) cross-link involves residue lysine 107. Residues 151-156 (KRFQTL) carry the LIR 3 motif. Residue lysine 159 forms a Glycyl lysine isopeptide (Lys-Gly) (interchain with G-Cter in ubiquitin) linkage. A Phosphoserine; by MAPK modification is found at serine 247. Serine 252 provides a ligand contact to FAD. 2 consecutive short sequence motifs (LIR) follow at residues 255-260 (LRFGCL) and 271-276 (DLYKKV). At serine 280 the chain carries Phosphoserine; by AMPK. An LIR 6 motif is present at residues 285 to 290 (SLYGQL). Glutamine 289 is an FAD binding site. A Glycyl lysine isopeptide (Lys-Gly) (interchain with G-Cter in ubiquitin) cross-link involves residue lysine 329. The LIR 7 signature appears at 335–339 (TGFPW). Histidine 355 serves as a coordination point for FAD. The tract at residues 371–470 (WISWEEGMKV…LIGVNYPKPM (100 aa)) is required for inhibition of CLOCK-BMAL1-mediated transcription. Positions 379-384 (KVFEEL) match the LIR 8 motif. FAD is bound at residue 387 to 389 (DAD). Short sequence motifs (LIR) lie at residues 395 to 400 (GSWMWL), 411 to 416 (HCYCPV), and 430 to 435 (RRYLPV). An interaction with TIMELESS region spans residues 471–493 (VNHAEASRLNIERMKQIYQQLSR). Residue lysine 485 forms a Glycyl lysine isopeptide (Lys-Gly) (interchain with G-Cter in ubiquitin) linkage. Short sequence motifs (LIR) lie at residues 486–491 (QIYQQL) and 492–497 (SRYRGL). A disordered region spans residues 559–606 (YAHGDSQQTHSLKQGRSSAGTGLSSGKRPSQEEDAQSVGPKVQRQSSN). Residues 563–586 (DSQQTHSLKQGRSSAGTGLSSGKR) show a composition bias toward polar residues. Residue lysine 585 forms a Glycyl lysine isopeptide (Lys-Gly) (interchain with G-Cter in ubiquitin) linkage. A Phosphoserine modification is found at serine 588.

It belongs to the DNA photolyase class-1 family. As to quaternary structure, component of the circadian core oscillator, which includes the CRY proteins, CLOCK or NPAS2, BMAL1 or BMAL2, CSNK1D and/or CSNK1E, TIMELESS, and the PER proteins. Interacts directly with TIMELESS. Interacts directly with PER1 and PER2; interaction with PER2 inhibits its ubiquitination and vice versa. Interacts with PER3. Interacts with FBXL21. Interacts with FBXL3. Interacts with PPP5C (via TPR repeats). Interacts with CLOCK-BMAL1 independently of PER2 and DNA. Interacts with HDAC1, HDAC2 and SIN3B. Interacts with nuclear receptors AR, NR1D1, NR3C1/GR, RORA and RORC; the interaction with at least NR3C1/GR is ligand dependent. Interacts with PRKDC. Interacts with the G protein subunit alpha GNAS; the interaction may block GPCR-mediated regulation of cAMP concentrations. Interacts with PRMT5. Interacts with EZH2. Interacts with MYBBP1A, DOCK7, HNRNPU, RPL7A, RPL8 and RPS3. Interacts with MAP1LC3B. Interacts with CLOCK. Interacts with BMAL1. Interacts weakly with HDAC3; this interaction is enhanced in the presence of FBXL3. Interacts with TRIM28, KCTD5 and DDB1. Interacts with DTL. Interacts with DDB1-CUL4A complex. Interacts with FOXO1. Interacts with PSMD2 in a KDM8-dependent manner. Interacts with KDM8 in a FBXL3-dependent manner. Interacts with PPARA. Interacts with PPARG in a ligand-dependent manner. Interacts with PPARD (via domain NR LBD) in a ligand-dependent manner. Interacts with NR1I2 (via domain NR LBD) in a ligand-dependent manner. Interacts with NR1I3, VDR and HNF4A. Requires FAD as cofactor. The cofactor is (6R)-5,10-methylene-5,6,7,8-tetrahydrofolate. Phosphorylation on Ser-247 by MAPK is important for the inhibition of CLOCK-BMAL1-mediated transcriptional activity. Phosphorylation by CSNK1E requires interaction with PER1 or PER2. Phosphorylation at Ser-71 and Ser-280 by AMPK decreases protein stability. Phosphorylation at Ser-588 exhibits a robust circadian rhythm with a peak at CT8, increases protein stability, prevents SCF(FBXL3)-mediated degradation and is antagonized by interaction with PRKDC. Post-translationally, ubiquitinated by the SCF(FBXL3) and SCF(FBXL21) complexes, regulating the balance between degradation and stabilization. The SCF(FBXL3) complex is mainly nuclear and mediates ubiquitination and subsequent degradation of CRY1. In contrast, cytoplasmic SCF(FBXL21) complex-mediated ubiquitination leads to stabilize CRY1 and counteract the activity of the SCF(FBXL3) complex. The SCF(FBXL3) and SCF(FBXL21) complexes probably mediate ubiquitination at different Lys residues. Ubiquitination at Lys-11 and Lys-107 are specifically ubiquitinated by the SCF(FBXL21) complex but not by the SCF(FBXL3) complex. Ubiquitination may be inhibited by PER2. Deubiquitinated by USP7. In terms of processing, undergoes autophagy-mediated degradation in the liver in a time-dependent manner. Autophagic degradation of CRY1 (an inhibitor of gluconeogenesis) occurs during periods of reduced feeding allowing induction of gluconeogenesis and maintenance of blood glucose levels. As to expression, expressed in cones, amacrine cells, and retinal ganglion cells of the retina (at protein level). Expressed in all tissues examined including heart, brain, spleen, lung, liver, skeletal muscle, kidney and testis. Higher levels in brain, liver and testis. In the retina, highly expressed in the ganglion cell layer (GCL) and in the inner nuclear layer (INL). Evenly distributed in central and peripheral retina. In the brain, highly expressed in the suprachiasmatic nucleus (SCN). High levels in cerebral cortical layers particularly in the pyramidial cell layer of the hippocampus, the granular cell layer of the dentate gyrus (DG) and the pyramidal cell layer of the piriform cortex (PFC).

The protein localises to the cytoplasm. Its subcellular location is the nucleus. KL001 (N-[3-(9H-carbazol-9-yl)-2-hydroxypropyl]-N-(2-furanylmethyl)-methanesulfonamide) binds to CRY1 and stabilizes it by inhibiting FBXL3- and ubiquitin-dependent degradation of CRY1 resulting in lengthening of the circadian periods. KL001-mediated CRY1 stabilization can inhibit glucagon-induced gluconeogenesis in primary hepatocytes. Functionally, transcriptional repressor which forms a core component of the circadian clock. The circadian clock, an internal time-keeping system, regulates various physiological processes through the generation of approximately 24 hour circadian rhythms in gene expression, which are translated into rhythms in metabolism and behavior. It is derived from the Latin roots 'circa' (about) and 'diem' (day) and acts as an important regulator of a wide array of physiological functions including metabolism, sleep, body temperature, blood pressure, endocrine, immune, cardiovascular, and renal function. Consists of two major components: the central clock, residing in the suprachiasmatic nucleus (SCN) of the brain, and the peripheral clocks that are present in nearly every tissue and organ system. Both the central and peripheral clocks can be reset by environmental cues, also known as Zeitgebers (German for 'timegivers'). The predominant Zeitgeber for the central clock is light, which is sensed by retina and signals directly to the SCN. The central clock entrains the peripheral clocks through neuronal and hormonal signals, body temperature and feeding-related cues, aligning all clocks with the external light/dark cycle. Circadian rhythms allow an organism to achieve temporal homeostasis with its environment at the molecular level by regulating gene expression to create a peak of protein expression once every 24 hours to control when a particular physiological process is most active with respect to the solar day. Transcription and translation of core clock components (CLOCK, NPAS2, BMAL1, BMAL2, PER1, PER2, PER3, CRY1 and CRY2) plays a critical role in rhythm generation, whereas delays imposed by post-translational modifications (PTMs) are important for determining the period (tau) of the rhythms (tau refers to the period of a rhythm and is the length, in time, of one complete cycle). A diurnal rhythm is synchronized with the day/night cycle, while the ultradian and infradian rhythms have a period shorter and longer than 24 hours, respectively. Disruptions in the circadian rhythms contribute to the pathology of cardiovascular diseases, cancer, metabolic syndromes and aging. A transcription/translation feedback loop (TTFL) forms the core of the molecular circadian clock mechanism. Transcription factors, CLOCK or NPAS2 and BMAL1 or BMAL2, form the positive limb of the feedback loop, act in the form of a heterodimer and activate the transcription of core clock genes and clock-controlled genes (involved in key metabolic processes), harboring E-box elements (5'-CACGTG-3') within their promoters. The core clock genes: PER1/2/3 and CRY1/2 which are transcriptional repressors form the negative limb of the feedback loop and interact with the CLOCK|NPAS2-BMAL1|BMAL2 heterodimer inhibiting its activity and thereby negatively regulating their own expression. This heterodimer also activates nuclear receptors NR1D1/2 and RORA/B/G, which form a second feedback loop and which activate and repress BMAL1 transcription, respectively. CRY1 and CRY2 have redundant functions but also differential and selective contributions at least in defining the pace of the SCN circadian clock and its circadian transcriptional outputs. More potent transcriptional repressor in cerebellum and liver than CRY2, though more effective in lengthening the period of the SCN oscillator. On its side, CRY2 seems to play a critical role in tuning SCN circadian period by opposing the action of CRY1. With CRY2, is dispensable for circadian rhythm generation but necessary for the development of intercellular networks for rhythm synchrony. Capable of translocating circadian clock core proteins such as PER proteins to the nucleus. Interacts with CLOCK-BMAL1 independently of PER proteins and is found at CLOCK-BMAL1-bound sites, suggesting that CRY may act as a molecular gatekeeper to maintain CLOCK-BMAL1 in a poised and repressed state until the proper time for transcriptional activation. Represses the CLOCK-BMAL1 induced transcription of BHLHE40/DEC1, ATF4, MTA1, KLF10 and NAMPT. May repress circadian target genes expression in collaboration with HDAC1 and HDAC2 through histone deacetylation. Mediates the clock-control activation of ATR and modulates ATR-mediated DNA damage checkpoint. In liver, mediates circadian regulation of cAMP signaling and gluconeogenesis by binding to membrane-coupled G proteins and blocking glucagon-mediated increases in intracellular cAMP concentrations and CREB1 phosphorylation. Inhibits hepatic gluconeogenesis by decreasing nuclear FOXO1 levels that down-regulates gluconeogenic gene expression. Besides its role in the maintenance of the circadian clock, is also involved in the regulation of other processes. Represses glucocorticoid receptor NR3C1/GR-induced transcriptional activity by binding to glucocorticoid response elements (GREs). Plays a key role in glucose and lipid metabolism modulation, in part, through the transcriptional regulation of genes involved in these pathways, such as LEP or ACSL4. Represses PPARD and its target genes in the skeletal muscle and limits exercise capacity. Plays an essential role in the generation of circadian rhythms in the retina. Represses the transcriptional activity of NR1I2. This chain is Cryptochrome-1 (Cry1), found in Mus musculus (Mouse).